Here is a 410-residue protein sequence, read N- to C-terminus: Transcription factor rglT (410 aa).

Positions 1-24 are disordered; it reads MQFDSLPLPPSSSHDTTSVPPLKR. A DNA-binding region (zn(2)-C6 fungal-type) is located at residues 28–55; sequence CDECRKRKLKCSGEATGCSRCLKQSLPC. The tract at residues 353 to 372 is disordered; it reads HRTRTVESPNEPGSCSPVSH. Over residues 358–369 the composition is skewed to polar residues; it reads VESPNEPGSCSP.

Its subcellular location is the nucleus. Functionally, transcription factor that is involved in protection against oxidative stress. Binds to promoter regions of the gliotoxin (GT) biosynthetic genes gliZ, gliF, gliT, gliM, gliA and gtmA. Two related but different DNA motifs (5'-TCGG-3' and 5'-CGGNCGG-3') are specifically enriched among rglT binding sites in GT-inducing conditions. Also indirectly regulates the expression of gliP, gliG, gliH and gliN. Plays a key role in resistance against exogenously-added GT and GT biosynthesis, mainly through the direct regulation of gliT. Furthermore, rglT is important for virulence in chemotherapeutic mice with invasive pulmonary aspergillosis (IPA). This is Transcription factor rglT from Aspergillus fumigatus (strain CBS 144.89 / FGSC A1163 / CEA10) (Neosartorya fumigata).